We begin with the raw amino-acid sequence, 1125 residues long: Angiopoietin-1 receptor (1125 aa).

The first 22 residues, 1–22 (MDSLAGLVLCGVSLLLSATVDG), serve as a signal peptide directing secretion. The Extracellular portion of the chain corresponds to 23–748 (AMDLILINSL…PADLGGRKML (726 aa)). Cysteines 44 and 102 form a disulfide. Residues 44-123 (CIASGWRPHE…RTMKMRQQAS (80 aa)) form the Ig-like C2-type 1 domain. Residue N158 is glycosylated (N-linked (GlcNAc...) asparagine). EGF-like domains are found at residues 210–252 (RCEA…RTCE), 254–299 (ACEP…LQCN), and 301–341 (ACQP…LQCE). Cystine bridges form between C211–C220, C224–C233, C227–C240, C242–C251, C255–C264, C268–C274, C280–C287, C289–C298, C302–C311, C315–C323, C317–C329, C331–C340, and C370–C424. The Ig-like C2-type 2 domain maps to 350-440 (PKIEDLPDHI…GMVEKPFNIS (91 aa)). Fibronectin type-III domains follow at residues 447–541 (PLNA…TASI), 545–637 (PPRG…TLSD), and 642–735 (QPEN…TLSE). The helical transmembrane segment at 749-769 (LIAILGSAGMTCLTVLLAFLI) threads the bilayer. Residues 770-1125 (MLQLKRANVQ…GIDCSAEEAA (356 aa)) lie on the Cytoplasmic side of the membrane. The 273-residue stretch at 825–1097 (IKFQDVIGEG…QILVSLNRML (273 aa)) folds into the Protein kinase domain. ATP contacts are provided by residues 831-839 (IGEGNFGQV) and K856. Residue Y861 is modified to Phosphotyrosine; by autocatalysis. D965 serves as the catalytic Proton acceptor. Residues Y993, Y1103, and Y1109 each carry the phosphotyrosine; by autocatalysis modification.

The protein belongs to the protein kinase superfamily. Tyr protein kinase family. Tie subfamily. Homodimer. Heterodimer with TIE1. Interacts with ANGPT1, ANGPT2 and ANGPT4. At cell-cell contacts in quiescent cells, forms a signaling complex composed of ANGPT1 plus TEK molecules from two adjoining cells. In the absence of endothelial cell-cell contacts, interaction with ANGPT1 mediates contacts with the extracellular matrix. Interacts (tyrosine phosphorylated) with TNIP2. Interacts (tyrosine phosphorylated) with SHC1 (via SH2 domain). Interacts with PTPRB; this promotes endothelial cell-cell adhesion. Interacts with DOK2, GRB2, GRB7, GRB14, PIK3R1 and PTPN11/SHP2. Colocalizes with DOK2 at contacts with the extracellular matrix in migrating cells. Post-translationally, proteolytic processing leads to the shedding of the extracellular domain (soluble TIE-2 alias sTIE-2). In terms of processing, autophosphorylated on tyrosine residues in response to ligand binding. Autophosphorylation occurs in trans, i.e. one subunit of the dimeric receptor phosphorylates tyrosine residues on the other subunit. Autophosphorylation occurs in a sequential manner, where Tyr-993 in the kinase activation loop is phosphorylated first, followed by autophosphorylation at Tyr-1109 and at additional tyrosine residues. ANGPT1-induced phosphorylation is impaired during hypoxia, due to increased expression of ANGPT2. Phosphorylation is important for interaction with GRB14, PIK3R1 and PTPN11. Phosphorylation at Tyr-1103 is important for interaction with GRB2 and GRB7. Phosphorylation at Tyr-1109 is important for interaction with DOK2 and for coupling to downstream signal transduction pathways in endothelial cells. Dephosphorylated by PTPRB. Ubiquitinated. The phosphorylated receptor is ubiquitinated and internalized, leading to its degradation. As to expression, specifically expressed in developing vascular endothelial cells.

Its subcellular location is the cell membrane. It localises to the cell junction. The protein localises to the focal adhesion. The protein resides in the cytoplasm. It is found in the cytoskeleton. Its subcellular location is the secreted. The enzyme catalyses L-tyrosyl-[protein] + ATP = O-phospho-L-tyrosyl-[protein] + ADP + H(+). Angiopoietin binding leads to receptor dimerization and activation by autophosphorylation at Tyr-993 on the kinase activation loop. Functionally, tyrosine-protein kinase that acts as a cell-surface receptor for ANGPT1, ANGPT2 and ANGPT4 and regulates angiogenesis, endothelial cell survival, proliferation, migration, adhesion and cell spreading, reorganization of the actin cytoskeleton, but also maintenance of vascular quiescence. Has anti-inflammatory effects by preventing the leakage of pro-inflammatory plasma proteins and leukocytes from blood vessels. Required for normal angiogenesis and heart development during embryogenesis. Required for post-natal hematopoiesis. After birth, activates or inhibits angiogenesis, depending on the context. Inhibits angiogenesis and promotes vascular stability in quiescent vessels, where endothelial cells have tight contacts. In quiescent vessels, ANGPT1 oligomers recruit TEK to cell-cell contacts, forming complexes with TEK molecules from adjoining cells, and this leads to preferential activation of phosphatidylinositol 3-kinase and the AKT1 signaling cascades. In migrating endothelial cells that lack cell-cell adhesions, ANGT1 recruits TEK to contacts with the extracellular matrix, leading to the formation of focal adhesion complexes, activation of PTK2/FAK and of the downstream kinases MAPK1/ERK2 and MAPK3/ERK1, and ultimately to the stimulation of sprouting angiogenesis. ANGPT1 signaling triggers receptor dimerization and autophosphorylation at specific tyrosine residues that then serve as binding sites for scaffold proteins and effectors. Signaling is modulated by ANGPT2 that has lower affinity for TEK, can promote TEK autophosphorylation in the absence of ANGPT1, but inhibits ANGPT1-mediated signaling by competing for the same binding site. Signaling is also modulated by formation of heterodimers with TIE1, and by proteolytic processing that gives rise to a soluble TEK extracellular domain. The soluble extracellular domain modulates signaling by functioning as decoy receptor for angiopoietins. TEK phosphorylates DOK2, GRB7, GRB14, PIK3R1, SHC1 and TIE1. This is Angiopoietin-1 receptor (TEK) from Bos taurus (Bovine).